Here is a 678-residue protein sequence, read N- to C-terminus: Pentatricopeptide repeat-containing protein At5g39980, chloroplastic (678 aa).

The N-terminal 64 residues, 1-64, are a transit peptide targeting the chloroplast; that stretch reads MYIEIASSSS…NKKVWRKQPE (64 aa). PPR repeat units follow at residues 154 to 188, 189 to 223, 224 to 258, 259 to 293, 294 to 328, 329 to 363, 364 to 398, 399 to 433, 434 to 468, 469 to 503, 535 to 569, 570 to 604, 605 to 638, and 639 to 674; these read SVFA…ALAP, DRYT…RVSG, DLVL…GITP, DLVA…GVLP, NTVS…NCAL, DLTT…DIEP, NVVS…DIEQ, NVVT…GIEP, NAIT…GVEI, DQVL…DNIP, DISV…GYFP, DSNV…GCVF, PDEV…DPNV, and NSKE…GILK.

The protein belongs to the PPR family. P subfamily.

Its subcellular location is the plastid. The protein resides in the chloroplast. This Arabidopsis thaliana (Mouse-ear cress) protein is Pentatricopeptide repeat-containing protein At5g39980, chloroplastic.